Consider the following 206-residue polypeptide: dTTP/UTP pyrophosphatase (206 aa).

Residue aspartate 79 is the Proton acceptor of the active site.

Belongs to the Maf family. YhdE subfamily. A divalent metal cation serves as cofactor.

It is found in the cytoplasm. The catalysed reaction is dTTP + H2O = dTMP + diphosphate + H(+). It carries out the reaction UTP + H2O = UMP + diphosphate + H(+). Functionally, nucleoside triphosphate pyrophosphatase that hydrolyzes dTTP and UTP. May have a dual role in cell division arrest and in preventing the incorporation of modified nucleotides into cellular nucleic acids. In Rhizobium etli (strain ATCC 51251 / DSM 11541 / JCM 21823 / NBRC 15573 / CFN 42), this protein is dTTP/UTP pyrophosphatase.